Here is a 367-residue protein sequence, read N- to C-terminus: Alginate lyase (367 aa).

Residues 1–24 (MTIINRKTAPALLALALFGGAAQA) form the signal peptide. Residues 63 to 64 (SK), 136 to 137 (HT), and tyrosine 254 each bind substrate.

This sequence belongs to the polysaccharide lyase 5 family.

It is found in the periplasm. It catalyses the reaction Eliminative cleavage of alginate to give oligosaccharides with 4-deoxy-alpha-L-erythro-hex-4-enuronosyl groups at their non-reducing ends and beta-D-mannuronate at their reducing end.. Its function is as follows. Catalyzes the depolymerization of alginate by cleaving the beta-1,4 glycosidic bond between two adjacent sugar residues via a beta-elimination mechanism. May serve to degrade mislocalized alginate that is trapped in the periplasmic space. The chain is Alginate lyase from Pseudomonas entomophila (strain L48).